A 465-amino-acid chain; its full sequence is SET domain-containing protein 3 (465 aa).

The 248-residue stretch at 18–265 (DKVTVKWDKK…AREELLDSYG (248 aa)) folds into the SET domain.

Belongs to the class V-like SAM-binding methyltransferase superfamily.

The chain is SET domain-containing protein 3 (set-3) from Caenorhabditis elegans.